Here is a 505-residue protein sequence, read N- to C-terminus: Tyrosine-protein kinase FRK (505 aa).

Residues serine 37 and serine 40 each carry the phosphoserine modification. Residues 42-110 (RHGHYFVALF…PSNYVAEDRS (69 aa)) form the SH3 domain. The SH2 domain occupies 116 to 208 (WFFGAIGRSD…GLCVKLGKPC (93 aa)). Threonine 178 carries the post-translational modification Phosphothreonine. In terms of domain architecture, Protein kinase spans 234–491 (IQLLKRLGSG…TLRWKLEDYF (258 aa)). ATP is bound by residues 240–248 (LGSGQFGEV) and lysine 262. Aspartate 354 (proton acceptor) is an active-site residue. Tyrosine 387 carries the post-translational modification Phosphotyrosine; by autocatalysis.

The protein belongs to the protein kinase superfamily. Tyr protein kinase family. SRC subfamily. As to quaternary structure, interacts (via the SH3-domain) with PTEN. Interacts with RB1. In terms of tissue distribution, predominantly expressed in epithelial derived cell lines and tissues, especially normal liver, kidney, breast and colon.

Its subcellular location is the cytoplasm. The protein resides in the nucleus. The enzyme catalyses L-tyrosyl-[protein] + ATP = O-phospho-L-tyrosyl-[protein] + ADP + H(+). Functionally, non-receptor tyrosine-protein kinase that negatively regulates cell proliferation. Positively regulates PTEN protein stability through phosphorylation of PTEN on 'Tyr-336', which in turn prevents its ubiquitination and degradation, possibly by reducing its binding to NEDD4. May function as a tumor suppressor. This chain is Tyrosine-protein kinase FRK (FRK), found in Homo sapiens (Human).